A 465-amino-acid polypeptide reads, in one-letter code: Ribulose bisphosphate carboxylase large chain (465 aa).

Lys4 bears the N6,N6,N6-trimethyllysine mark. 2 residues coordinate substrate: Asn113 and Thr163. The active-site Proton acceptor is Lys165. Lys167 is a binding site for substrate. Mg(2+) contacts are provided by Lys191, Asp193, and Glu194. The residue at position 191 (Lys191) is an N6-carboxylysine. His284 (proton acceptor) is an active-site residue. Substrate-binding residues include Arg285, His317, and Ser369.

It belongs to the RuBisCO large chain family. Type I subfamily. Heterohexadecamer of 8 large chains and 8 small chains; disulfide-linked. The disulfide link is formed within the large subunit homodimers. The cofactor is Mg(2+). Post-translationally, the disulfide bond which can form in the large chain dimeric partners within the hexadecamer appears to be associated with oxidative stress and protein turnover.

It localises to the plastid. It is found in the chloroplast. It catalyses the reaction 2 (2R)-3-phosphoglycerate + 2 H(+) = D-ribulose 1,5-bisphosphate + CO2 + H2O. The catalysed reaction is D-ribulose 1,5-bisphosphate + O2 = 2-phosphoglycolate + (2R)-3-phosphoglycerate + 2 H(+). Its function is as follows. RuBisCO catalyzes two reactions: the carboxylation of D-ribulose 1,5-bisphosphate, the primary event in carbon dioxide fixation, as well as the oxidative fragmentation of the pentose substrate in the photorespiration process. Both reactions occur simultaneously and in competition at the same active site. This is Ribulose bisphosphate carboxylase large chain from Ailanthus altissima (Tree-of-heaven).